The sequence spans 224 residues: Transcription cofactor HES-6 (224 aa).

The disordered stretch occupies residues 1 to 31 (MAPSQAPSRDRAGQEDEDRWEARGDRKARKP). The segment covering 8-25 (SRDRAGQEDEDRWEARGD) has biased composition (basic and acidic residues). One can recognise a bHLH domain in the interval 25-77 (DRKARKPLVEKKRRARINESLQELRLLLAGTEVQAKLENAEVLELTVRRVQGA). The Orange domain maps to 96–129 (FAAGYIQCMHEVHTFVSTCQAIDATVSAELLNHL). The tract at residues 146–209 (GDSLAGLPGG…GPDLVSTSLG (64 aa)) is disordered. Positions 158–171 (RSSWPPGGSPESPL) are enriched in low complexity. Over residues 181-190 (LCSDLEEIPE) the composition is skewed to acidic residues. The short motif at 221–224 (WRPW) is the WRPW motif element.

As to quaternary structure, transcription repression requires formation of a complex with a corepressor protein of the Groucho/TLE family. Interacts with HES1. In terms of tissue distribution, expressed in both undifferentiated and differentiated cells. High levels of expression are observed in several embryonic tissues including the nervous system, muscle and thymus. In the nervous system, initially expressed in the closing neural tube, then in the spinal cord, cranial and dorsal root ganglia, and brain neuroepithelium. Also expressed in epithelial cells of the embryonic respiratory, urinary and digestive systems. In the limb buds, expressed in skeletal muscle and presumptive tendons.

It is found in the nucleus. Its function is as follows. Does not bind DNA itself but suppresses both HES1-mediated N box-dependent transcriptional repression and binding of HES1 to E box sequences. Also suppresses HES1-mediated inhibition of the heterodimer formed by ASCL1/MASH1 and TCF3/E47, allowing ASCL1 and TCF3 to up-regulate transcription in its presence. Promotes cell differentiation. In Mus musculus (Mouse), this protein is Transcription cofactor HES-6.